The primary structure comprises 502 residues: Glycerol kinase (502 aa).

Thr-12 is a binding site for ADP. Residues Thr-12, Thr-13, and Ser-14 each coordinate ATP. Position 12 (Thr-12) interacts with sn-glycerol 3-phosphate. ADP is bound at residue Arg-16. Positions 82, 83, 134, and 243 each coordinate sn-glycerol 3-phosphate. Glycerol is bound by residues Arg-82, Glu-83, Tyr-134, Asp-243, and Gln-244. Positions 265 and 308 each coordinate ADP. Residues Thr-265, Gly-308, Gln-312, and Gly-412 each contribute to the ATP site. Gly-412 contributes to the ADP binding site.

This sequence belongs to the FGGY kinase family.

The catalysed reaction is glycerol + ATP = sn-glycerol 3-phosphate + ADP + H(+). Its pathway is polyol metabolism; glycerol degradation via glycerol kinase pathway; sn-glycerol 3-phosphate from glycerol: step 1/1. Its activity is regulated as follows. Inhibited by fructose 1,6-bisphosphate (FBP). In terms of biological role, key enzyme in the regulation of glycerol uptake and metabolism. Catalyzes the phosphorylation of glycerol to yield sn-glycerol 3-phosphate. The protein is Glycerol kinase of Methylobacterium nodulans (strain LMG 21967 / CNCM I-2342 / ORS 2060).